Here is a 266-residue protein sequence, read N- to C-terminus: uncharacterized protein (266 aa).

Ser176 carries the phosphoserine modification. Residue Thr178 is modified to Phosphothreonine.

This is an uncharacterized protein from Schizosaccharomyces pombe (strain 972 / ATCC 24843) (Fission yeast).